Consider the following 528-residue polypeptide: Galactokinase (528 aa).

4 residues coordinate alpha-D-galactose: R53, E59, H60, and D62. 4 residues coordinate ATP: G165, G167, S169, and S170. Alpha-D-galactose contacts are provided by N213 and D217. D217 (proton acceptor) is an active-site residue. Positions 264, 265, and 266 each coordinate ATP. Y274 contributes to the alpha-D-galactose binding site. At S381 the chain carries Phosphoserine.

This sequence belongs to the GHMP kinase family. GalK subfamily.

The enzyme catalyses alpha-D-galactose + ATP = alpha-D-galactose 1-phosphate + ADP + H(+). Its pathway is carbohydrate metabolism; galactose metabolism. Functionally, galactokinase is a key enzyme in the galactose metabolism where it catalyzes the conversion of alpha-D-galactose to galactose 1-phosphate. Can also induce the transcription of the yeast GAL genes in response to the organism being challenged with galactose as the sole source of carbon. It's striking amino acid sequence similarity to GAL3 might explain its GAL3-like induction activity. The polypeptide is Galactokinase (Saccharomyces cerevisiae (strain ATCC 204508 / S288c) (Baker's yeast)).